A 461-amino-acid polypeptide reads, in one-letter code: Asparagine--tRNA ligase (461 aa).

This sequence belongs to the class-II aminoacyl-tRNA synthetase family. As to quaternary structure, homodimer.

The protein localises to the cytoplasm. It carries out the reaction tRNA(Asn) + L-asparagine + ATP = L-asparaginyl-tRNA(Asn) + AMP + diphosphate + H(+). This Geotalea uraniireducens (strain Rf4) (Geobacter uraniireducens) protein is Asparagine--tRNA ligase.